A 411-amino-acid polypeptide reads, in one-letter code: Imidazolonepropionase (411 aa).

Fe(3+)-binding residues include His78 and His80. Residues His78 and His80 each coordinate Zn(2+). 4-imidazolone-5-propanoate-binding residues include Arg87, Tyr150, and His183. An N-formimidoyl-L-glutamate-binding site is contributed by Tyr150. His248 lines the Fe(3+) pocket. Zn(2+) is bound at residue His248. Gln251 is a binding site for 4-imidazolone-5-propanoate. Position 322 (Asp322) interacts with Fe(3+). Asp322 lines the Zn(2+) pocket. 2 residues coordinate N-formimidoyl-L-glutamate: Asn324 and Gly326. Residue Thr327 participates in 4-imidazolone-5-propanoate binding.

This sequence belongs to the metallo-dependent hydrolases superfamily. HutI family. It depends on Zn(2+) as a cofactor. Fe(3+) is required as a cofactor.

The protein resides in the cytoplasm. It catalyses the reaction 4-imidazolone-5-propanoate + H2O = N-formimidoyl-L-glutamate. Its pathway is amino-acid degradation; L-histidine degradation into L-glutamate; N-formimidoyl-L-glutamate from L-histidine: step 3/3. Its function is as follows. Catalyzes the hydrolytic cleavage of the carbon-nitrogen bond in imidazolone-5-propanoate to yield N-formimidoyl-L-glutamate. It is the third step in the universal histidine degradation pathway. The polypeptide is Imidazolonepropionase (Flavobacterium psychrophilum (strain ATCC 49511 / DSM 21280 / CIP 103535 / JIP02/86)).